The primary structure comprises 293 residues: Elongation factor Ts (293 aa).

The involved in Mg(2+) ion dislocation from EF-Tu stretch occupies residues 80-83 (TDFV).

Belongs to the EF-Ts family.

It is found in the cytoplasm. Its function is as follows. Associates with the EF-Tu.GDP complex and induces the exchange of GDP to GTP. It remains bound to the aminoacyl-tRNA.EF-Tu.GTP complex up to the GTP hydrolysis stage on the ribosome. The protein is Elongation factor Ts of Staphylococcus aureus (strain USA300).